The following is a 459-amino-acid chain: Argininosuccinate lyase (459 aa).

The protein belongs to the lyase 1 family. Argininosuccinate lyase subfamily.

The protein localises to the cytoplasm. It carries out the reaction 2-(N(omega)-L-arginino)succinate = fumarate + L-arginine. It functions in the pathway amino-acid biosynthesis; L-arginine biosynthesis; L-arginine from L-ornithine and carbamoyl phosphate: step 3/3. The protein is Argininosuccinate lyase of Staphylococcus aureus (strain MSSA476).